A 1477-amino-acid chain; its full sequence is Lysine-specific demethylase rbr-2 (1477 aa).

The interval 1-37 (MRARRQENSISTPSAPSTSTSPRKKASIGNSRSKNHG) is disordered. The span at 9–21 (SISTPSAPSTSTS) shows a compositional bias: low complexity. In terms of domain architecture, JmjN spans 56–97 (APIYYPTEEEFSDPIEYVAKIRHEAEKFGVVKIVPPANFKPP). Residues 121–218 (VKEKHTFIDR…HIEPFNRNLK (98 aa)) form the ARID domain. The segment at 222 to 314 (MKNDDESDDE…KAEGDDDDDE (93 aa)) is disordered. Over residues 246–259 (MRTEIEVPNDKTTE) the composition is skewed to basic and acidic residues. Basic residues-rich tracts occupy residues 272-283 (GRRRSKNKKASS) and 295-304 (NSTRGRKNKK). The PHD-type 1 zinc finger occupies 319-371 (QVFCVACNEGKDEDLLLLCDIDGCNNGRHTYCCDPVLDEVPEGEWRCPKCIES). The region spanning 468–634 (QYASHAWNLN…KGRECVESYS (167 aa)) is the JmjC domain. The Fe cation site is built by His-514, Asp-517, and His-602. Residues 874 to 926 (IIDKLEKWMEQVEMWRNRAKDAIYREQEYSKEEIEKIIEEGDEYDIKLEEIDE) adopt a coiled-coil conformation. Residues 1203–1257 (LEACSCLGFNKSDDSESTLTCIMCDSEFHVRCCEWSPFLEKLPEGCFLCVRCLRG) form a PHD-type 2 zinc finger. Positions 1375-1404 (TAKRKRPSVSHKETSKKSRKRQSQASPSEY) are disordered. Residues 1411–1466 (FKSCQARACLKPYGDSVNWVMCEAGCKNWFHVICLGFTLREINDMHEYRCSSCLDH) form a PHD-type 3 zinc finger.

This sequence belongs to the JARID1 histone demethylase family. Fe(2+) is required as a cofactor.

Its subcellular location is the nucleus. It catalyses the reaction N(6),N(6),N(6)-trimethyl-L-lysyl(4)-[histone H3] + 3 2-oxoglutarate + 3 O2 = L-lysyl(4)-[histone H3] + 3 formaldehyde + 3 succinate + 3 CO2. Histone demethylase that specifically demethylates 'Lys-4' of histone H3, thereby playing a central role in histone code. Does not demethylate histone H3 'Lys-9', H3 'Lys-27', H3 'Lys-36', H3 'Lys-79' or H4 'Lys-20'. Demethylates trimethylated and dimethylated but not monomethylated H3 'Lys-4'. Required for normal longevity of the soma in a germline-dependent manner. Implicated in the epigenetic inheritance of lifespan over several generations. Involved in larval development and vulva formation. This Caenorhabditis elegans protein is Lysine-specific demethylase rbr-2 (rbr-2).